Reading from the N-terminus, the 130-residue chain is Small ribosomal subunit protein uS8 (130 aa).

Belongs to the universal ribosomal protein uS8 family. Part of the 30S ribosomal subunit. Contacts proteins S5 and S12.

Its function is as follows. One of the primary rRNA binding proteins, it binds directly to 16S rRNA central domain where it helps coordinate assembly of the platform of the 30S subunit. The chain is Small ribosomal subunit protein uS8 from Ruegeria sp. (strain TM1040) (Silicibacter sp.).